The sequence spans 493 residues: UDP-glucose 6-dehydrogenase (493 aa).

Residues 11 to 16, Asp-36, Arg-41, and 89 to 93 each bind NAD(+); these read GAGYVG and VNTPT. The segment at 88 to 110 is disordered; that stretch reads SVNTPTKTYGMGKGRAADLKYIE. The residue at position 107 (Lys-107) is an N6-acetyllysine. An allosteric switch region region spans residues 129–135; sequence KSTVPVR. 130-132 provides a ligand contact to NAD(+); that stretch reads STV. Glu-161 acts as the Proton donor/acceptor in catalysis. Substrate is bound by residues 161–165, 220–224, Arg-260, and 267–273; these read EFLAE, KLAAN, and KASVGFG. Glu-165 serves as a coordination point for NAD(+). Catalysis depends on Lys-220, which acts as the Proton donor/acceptor. Cys-276 acts as the Nucleophile in catalysis. 276–279 contacts NAD(+); sequence CFQK. The interval 321-325 is important for formation of active hexamer structure; that stretch reads SLFNT. 338–339 provides a ligand contact to substrate; sequence FK. Arg-346 is an NAD(+) binding site. Arg-442 serves as a coordination point for substrate. Positions 466 to 493 are disordered; it reads VSSKRIPYTPGEIPKFSLQDPPNKKPKV. Thr-474 bears the Phosphothreonine mark.

This sequence belongs to the UDP-glucose/GDP-mannose dehydrogenase family. Homohexamer.

The catalysed reaction is UDP-alpha-D-glucose + 2 NAD(+) + H2O = UDP-alpha-D-glucuronate + 2 NADH + 3 H(+). It participates in nucleotide-sugar biosynthesis; UDP-alpha-D-glucuronate biosynthesis; UDP-alpha-D-glucuronate from UDP-alpha-D-glucose: step 1/1. With respect to regulation, UDP-alpha-D-xylose (UDX) acts as a feedback inhibitor. It binds at the same site as the substrate, but functions as allosteric inhibitor by triggering a conformation change that disrupts the active hexameric ring structure and gives rise to an inactive, horseshoe-shaped hexamer. Functionally, catalyzes the formation of UDP-alpha-D-glucuronate, a constituent of complex glycosaminoglycans. Required for the biosynthesis of chondroitin sulfate and heparan sulfate. Required for embryonic development via its role in the biosynthesis of glycosaminoglycans. Required for proper brain and neuronal development. This Rattus norvegicus (Rat) protein is UDP-glucose 6-dehydrogenase (Ugdh).